We begin with the raw amino-acid sequence, 34 residues long: Omega-ctenitoxin-Pn2a (34 aa).

3 disulfide bridges follow: cysteine 2-cysteine 16, cysteine 9-cysteine 26, and cysteine 15-cysteine 28.

The protein belongs to the neurotoxin 02 (plectoxin) family. 01 (Tx3) subfamily. In terms of tissue distribution, expressed by the venom gland.

It is found in the secreted. In terms of biological role, inhibits all known high-voltage activated calcium channels (L-, P/Q- and R-type currents) (Cav), and most effectively the P/Q- (Cav2.1/CACNA1A) and R-type (Cav2.3/CACNA1E) currents. In rat brain, inhibits glutamate release, neuronal death and loss of neurotransmission in the hippocampus resulting from ischemia. In vivo, induces rapid general flaccid paralysis followed by death in 10-30 minutes at dose levels of 5 ug per mouse. This is Omega-ctenitoxin-Pn2a from Phoneutria nigriventer (Brazilian armed spider).